We begin with the raw amino-acid sequence, 45 residues long: Large ribosomal subunit protein bL36 (45 aa).

The disordered stretch occupies residues 1 to 45 (MRVSSSIKADPSKGDKLVRRKGRLYVINKKDPNRKQRQAGPARKK).

It belongs to the bacterial ribosomal protein bL36 family.

The chain is Large ribosomal subunit protein bL36 from Chlamydia trachomatis serovar L2 (strain ATCC VR-902B / DSM 19102 / 434/Bu).